We begin with the raw amino-acid sequence, 63 residues long: Prokaryotic ubiquitin-like protein Pup 1 (63 aa).

Basic and acidic residues-rich tracts occupy residues 1-12 and 24-33; these read MSQEKVQRHGGG and GQERREKLGE. The disordered stretch occupies residues 1-35; the sequence is MSQEKVQRHGGGDGEEESGPEAAGQERREKLGEDV. The interval 20–57 is ARC ATPase binding; sequence PEAAGQERREKLGEDVDAILDEIDDVLEENAEDFVRAY. Positions 25–51 form a coiled coil; that stretch reads QERREKLGEDVDAILDEIDDVLEENAE. Deamidated glutamine is present on Q63. An Isoglutamyl lysine isopeptide (Gln-Lys) (interchain with K-? in acceptor proteins) cross-link involves residue Q63.

It belongs to the prokaryotic ubiquitin-like protein family. Strongly interacts with the proteasome-associated ATPase ARC through a hydrophobic interface; the interacting region of Pup lies in its C-terminal half. There is one Pup binding site per ARC hexamer ring. Is modified by deamidation of its C-terminal glutamine to glutamate by the deamidase Dop, a prerequisite to the subsequent pupylation process.

The protein operates within protein degradation; proteasomal Pup-dependent pathway. In terms of biological role, protein modifier that is covalently attached to lysine residues of substrate proteins, thereby targeting them for proteasomal degradation. The tagging system is termed pupylation. The polypeptide is Prokaryotic ubiquitin-like protein Pup 1 (Saccharopolyspora erythraea (strain ATCC 11635 / DSM 40517 / JCM 4748 / NBRC 13426 / NCIMB 8594 / NRRL 2338)).